Reading from the N-terminus, the 179-residue chain is Large ribosomal subunit protein uL5 (179 aa).

It belongs to the universal ribosomal protein uL5 family. In terms of assembly, part of the 50S ribosomal subunit; part of the 5S rRNA/L5/L18/L25 subcomplex. Contacts the 5S rRNA and the P site tRNA. Forms a bridge to the 30S subunit in the 70S ribosome.

In terms of biological role, this is one of the proteins that bind and probably mediate the attachment of the 5S RNA into the large ribosomal subunit, where it forms part of the central protuberance. In the 70S ribosome it contacts protein S13 of the 30S subunit (bridge B1b), connecting the 2 subunits; this bridge is implicated in subunit movement. Contacts the P site tRNA; the 5S rRNA and some of its associated proteins might help stabilize positioning of ribosome-bound tRNAs. The polypeptide is Large ribosomal subunit protein uL5 (Thiobacillus denitrificans (strain ATCC 25259 / T1)).